A 36-amino-acid chain; its full sequence is Allergen Act d 3 (36 aa).

Post-translationally, N-glycosylated.

The sequence is that of Allergen Act d 3 from Actinidia deliciosa (Kiwi).